The primary structure comprises 110 residues: Minor capsid protein VP2 (110 aa).

The protein belongs to the vesivirus VP2 protein family. Homooligomer. The portal-like structure consists in 12 copies of VP2. Interacts with capsid protein VP1.

Its subcellular location is the virion. The protein localises to the host cytoplasm. Functionally, minor structural protein that forms a portal-like structure at a unique three-fold axis of symmetry, following binding to the host receptor. The channel formed by VP2 may allow the delivery of the viral genome through the host endosomal membrane. The sequence is that of Minor capsid protein VP2 from Otariidae (fur seals &amp; sea lions).